The primary structure comprises 289 residues: ATP synthase gamma chain (289 aa).

This sequence belongs to the ATPase gamma chain family. F-type ATPases have 2 components, CF(1) - the catalytic core - and CF(0) - the membrane proton channel. CF(1) has five subunits: alpha(3), beta(3), gamma(1), delta(1), epsilon(1). CF(0) has three main subunits: a, b and c.

The protein resides in the cell inner membrane. In terms of biological role, produces ATP from ADP in the presence of a proton gradient across the membrane. The gamma chain is believed to be important in regulating ATPase activity and the flow of protons through the CF(0) complex. The chain is ATP synthase gamma chain from Histophilus somni (strain 2336) (Haemophilus somnus).